Here is an 86-residue protein sequence, read N- to C-terminus: DNA-directed RNA polymerase subunit omega (86 aa).

It belongs to the RNA polymerase subunit omega family. As to quaternary structure, the RNAP catalytic core consists of 2 alpha, 1 beta, 1 beta' and 1 omega subunit. When a sigma factor is associated with the core the holoenzyme is formed, which can initiate transcription.

The enzyme catalyses RNA(n) + a ribonucleoside 5'-triphosphate = RNA(n+1) + diphosphate. Promotes RNA polymerase assembly. Latches the N- and C-terminal regions of the beta' subunit thereby facilitating its interaction with the beta and alpha subunits. The polypeptide is DNA-directed RNA polymerase subunit omega (Psychrobacter sp. (strain PRwf-1)).